A 461-amino-acid polypeptide reads, in one-letter code: Squalene synthase BSS (461 aa).

The NADP(+) site is built by Arg-51 and Arg-76. Positions 79, 82, and 83 each coordinate Mg(2+). NADP(+) contacts are provided by Arg-219, Lys-322, and Arg-324. Residues 430-450 (VTQHWWSILIFLISIAVFFIP) traverse the membrane as a helical segment.

This sequence belongs to the phytoene/squalene synthase family. Mg(2+) serves as cofactor.

The protein resides in the endoplasmic reticulum membrane. It carries out the reaction 2 (2E,6E)-farnesyl diphosphate + NADPH + H(+) = squalene + 2 diphosphate + NADP(+). The enzyme catalyses 2 (2E,6E)-farnesyl diphosphate + NADH + H(+) = squalene + 2 diphosphate + NAD(+). Its function is as follows. Converts farnesyl diphosphate (FPP) into squalene, a precursor for sterol biosynthesis in eukaryotes. Does not possess botryococcene synthase activity. The polypeptide is Squalene synthase BSS (Botryococcus braunii (Green alga)).